The primary structure comprises 144 residues: DNA-directed RNA polymerases II and V subunit 6B (144 aa).

The span at 1–32 (MADDDYNEVDDLGYEDEPAEPEIEEGVEEDAD) shows a compositional bias: acidic residues. The interval 1–62 (MADDDYNEVD…EPVQRPRKTS (62 aa)) is disordered. Residues 46-56 (TEDKVETEPVQ) show a composition bias toward basic and acidic residues.

Belongs to the archaeal Rpo6/eukaryotic RPB6 RNA polymerase subunit family. In terms of assembly, component of the RNA polymerase II and V complexes.

The protein localises to the nucleus. Functionally, DNA-dependent RNA polymerase catalyzes the transcription of DNA into RNA using the four ribonucleoside triphosphates as substrates. Component of RNA polymerase II which synthesizes mRNA precursors and many functional non-coding RNAs. Pol II is the central component of the basal RNA polymerase II transcription machinery. It is composed of mobile elements that move relative to each other. Component of RNA polymerase V which mediates RNA-directed DNA methylation-dependent (RdDM) transcriptional gene silencing (TGS) of endogenous repeated sequences, including transposable elements. The polypeptide is DNA-directed RNA polymerases II and V subunit 6B (NRPB6B) (Arabidopsis thaliana (Mouse-ear cress)).